The following is a 486-amino-acid chain: Glutamyl-tRNA(Gln) amidotransferase subunit A (486 aa).

Residues Lys-78 and Ser-153 each act as charge relay system in the active site. The active-site Acyl-ester intermediate is the Ser-177.

This sequence belongs to the amidase family. GatA subfamily. In terms of assembly, heterotrimer of A, B and C subunits.

It carries out the reaction L-glutamyl-tRNA(Gln) + L-glutamine + ATP + H2O = L-glutaminyl-tRNA(Gln) + L-glutamate + ADP + phosphate + H(+). In terms of biological role, allows the formation of correctly charged Gln-tRNA(Gln) through the transamidation of misacylated Glu-tRNA(Gln) in organisms which lack glutaminyl-tRNA synthetase. The reaction takes place in the presence of glutamine and ATP through an activated gamma-phospho-Glu-tRNA(Gln). The sequence is that of Glutamyl-tRNA(Gln) amidotransferase subunit A from Ruminiclostridium cellulolyticum (strain ATCC 35319 / DSM 5812 / JCM 6584 / H10) (Clostridium cellulolyticum).